Reading from the N-terminus, the 283-residue chain is Pantothenate synthetase (283 aa).

ATP is bound at residue M30 to H37. The Proton donor role is filled by H37. Residue Q61 coordinates (R)-pantoate. Q61 contacts beta-alanine. G149 to D152 contacts ATP. Position 155 (Q155) interacts with (R)-pantoate. L186–R189 provides a ligand contact to ATP.

Belongs to the pantothenate synthetase family. Homodimer.

The protein resides in the cytoplasm. The enzyme catalyses (R)-pantoate + beta-alanine + ATP = (R)-pantothenate + AMP + diphosphate + H(+). It participates in cofactor biosynthesis; (R)-pantothenate biosynthesis; (R)-pantothenate from (R)-pantoate and beta-alanine: step 1/1. Catalyzes the condensation of pantoate with beta-alanine in an ATP-dependent reaction via a pantoyl-adenylate intermediate. The protein is Pantothenate synthetase of Escherichia coli O17:K52:H18 (strain UMN026 / ExPEC).